We begin with the raw amino-acid sequence, 277 residues long: Large ribosomal subunit protein uL2c (277 aa).

The tract at residues 225–277 (MNPCDHPHGGGEGRSPIGRPKPVTPWGKPALGKKTRSPKRFSNKYIIRSRKMV) is disordered. Basic residues predominate over residues 255–277 (LGKKTRSPKRFSNKYIIRSRKMV).

It belongs to the universal ribosomal protein uL2 family. As to quaternary structure, part of the 50S ribosomal subunit.

It is found in the plastid. Its subcellular location is the chloroplast. The polypeptide is Large ribosomal subunit protein uL2c (rpl2) (Euglena gracilis).